Reading from the N-terminus, the 638-residue chain is Chaperone protein DnaK (638 aa).

Thr198 carries the post-translational modification Phosphothreonine; by autocatalysis. Disordered stretches follow at residues 539–559 (DGLA…LASD) and 602–638 (QAKA…DDKK). Over residues 611–623 (GQAHDAGQEKPAD) the composition is skewed to basic and acidic residues. Acidic residues predominate over residues 624-638 (DVVDAEFEEVKDDKK).

The protein belongs to the heat shock protein 70 family.

Acts as a chaperone. The polypeptide is Chaperone protein DnaK (Shewanella frigidimarina (strain NCIMB 400)).